The following is a 397-amino-acid chain: Acetate kinase 2 (397 aa).

A Mg(2+)-binding site is contributed by asparagine 10. Lysine 17 contacts ATP. Substrate is bound at residue arginine 90. The active-site Proton donor/acceptor is aspartate 147. ATP is bound by residues 207–211 (HLGNG), 281–283 (DAR), and 329–333 (GIGEN). Glutamate 385 provides a ligand contact to Mg(2+).

This sequence belongs to the acetokinase family. In terms of assembly, homodimer. Requires Mg(2+) as cofactor. Mn(2+) is required as a cofactor.

It is found in the cytoplasm. The enzyme catalyses acetate + ATP = acetyl phosphate + ADP. It participates in metabolic intermediate biosynthesis; acetyl-CoA biosynthesis; acetyl-CoA from acetate: step 1/2. Functionally, catalyzes the formation of acetyl phosphate from acetate and ATP. Can also catalyze the reverse reaction. The chain is Acetate kinase 2 from Aliivibrio fischeri (strain ATCC 700601 / ES114) (Vibrio fischeri).